The sequence spans 351 residues: Homeobox-leucine zipper protein HOX23 (351 aa).

The interval 34–128 (LQDHAHGGHG…SFESGNKLEP (95 aa)) is disordered. A compositionally biased stretch (low complexity) spans 56 to 65 (SPFLPDLAMD). The homeobox DNA-binding region spans 101-160 (GGEKKRRLSVEQVRTLERSFESGNKLEPERKAQLARALGLQPRQVAIWFQNRRARWKTKQ). A compositionally biased stretch (basic and acidic residues) spans 114-128 (RTLERSFESGNKLEP). The leucine-zipper stretch occupies residues 159–203 (KQLEKDFDALRRQLDAARAENDALLSLNSKLHAEIVALKGGAAAA). Residues 227–263 (EASCSNRSENSSEINLDISRPAPPPPPPPANESPVNR) are disordered. Positions 228–240 (ASCSNRSENSSEI) are enriched in polar residues. The segment covering 247–257 (PAPPPPPPPAN) has biased composition (pro residues).

The protein belongs to the HD-ZIP homeobox family. Class I subfamily. Expressed in seedlings, roots, stems, leaf sheaths and panicles.

Its subcellular location is the nucleus. Functionally, probable transcription factor. The protein is Homeobox-leucine zipper protein HOX23 (HOX23) of Oryza sativa subsp. indica (Rice).